The following is a 263-amino-acid chain: Non-homologous end joining protein Ku 3 (263 aa).

The region spanning F6–R169 is the Ku domain.

This sequence belongs to the prokaryotic Ku family. In terms of assembly, homodimer. Interacts with LigD.

Its function is as follows. With LigD forms a non-homologous end joining (NHEJ) DNA repair enzyme, which repairs dsDNA breaks with reduced fidelity. Binds linear dsDNA with 5'- and 3'- overhangs but not closed circular dsDNA nor ssDNA. Recruits and stimulates the ligase activity of LigD. In Saccharopolyspora erythraea (strain ATCC 11635 / DSM 40517 / JCM 4748 / NBRC 13426 / NCIMB 8594 / NRRL 2338), this protein is Non-homologous end joining protein Ku 3.